A 501-amino-acid chain; its full sequence is Aldehyde dehydrogenase 1A1 (501 aa).

Residue S2 is modified to N-acetylserine. Residues K91 and K128 each carry the N6-acetyllysine modification. Residues 167–170 (IPWN), 193–196 (KPAE), 226–227 (GP), and 246–247 (GS) contribute to the NAD(+) site. Residue K252 is modified to N6-acetyllysine. The Proton acceptor role is filled by E269. 269–271 (ELG) provides a ligand contact to NAD(+). The active-site Nucleophile is C303. A mediates interaction with PRMT3 region spans residues 336–501 (LTPGVTQGPQ…VTVKISQKNS (166 aa)). T337 carries the post-translational modification Phosphothreonine. Residue 349 to 353 (EQYDK) coordinates NAD(+). Residues K353 and K367 each carry the N6-acetyllysine modification. 400–402 (EIF) is a binding site for NAD(+). Position 410 is an N6-acetyllysine (K410). Position 413 is a phosphoserine (S413). 3 positions are modified to N6-acetyllysine: K419, K435, and K495.

It belongs to the aldehyde dehydrogenase family. Homotetramer. Interacts with PRMT3; the interaction is direct, inhibits ALDH1A1 aldehyde dehydrogenase activity and is independent of the methyltransferase activity of PRMT3. In terms of processing, the N-terminus is blocked most probably by acetylation. Expressed by erythrocytes (at protein level).

The protein localises to the cytoplasm. Its subcellular location is the cytosol. The protein resides in the cell projection. It localises to the axon. The catalysed reaction is an aldehyde + NAD(+) + H2O = a carboxylate + NADH + 2 H(+). It carries out the reaction all-trans-retinal + NAD(+) + H2O = all-trans-retinoate + NADH + 2 H(+). It catalyses the reaction 9-cis-retinal + NAD(+) + H2O = 9-cis-retinoate + NADH + 2 H(+). The enzyme catalyses 11-cis-retinal + NAD(+) + H2O = 11-cis-retinoate + NADH + 2 H(+). The catalysed reaction is 13-cis-retinal + NAD(+) + H2O = 13-cis-retinoate + NADH + 2 H(+). It carries out the reaction 3-deoxyglucosone + NAD(+) + H2O = 2-dehydro-3-deoxy-D-gluconate + NADH + 2 H(+). It catalyses the reaction (E)-4-hydroxynon-2-enal + NAD(+) + H2O = (E)-4-hydroxynon-2-enoate + NADH + 2 H(+). The enzyme catalyses malonaldehyde + NAD(+) + H2O = 3-oxopropanoate + NADH + 2 H(+). The catalysed reaction is hexanal + NAD(+) + H2O = hexanoate + NADH + 2 H(+). It carries out the reaction propanal + NAD(+) + H2O = propanoate + NADH + 2 H(+). It catalyses the reaction acetaldehyde + NAD(+) + H2O = acetate + NADH + 2 H(+). The enzyme catalyses benzaldehyde + NAD(+) + H2O = benzoate + NADH + 2 H(+). The catalysed reaction is 4-aminobutanal + NAD(+) + H2O = 4-aminobutanoate + NADH + 2 H(+). It participates in cofactor metabolism; retinol metabolism. With respect to regulation, inhibited by citral, disulfiram, and cyanamide. Activated by diethylstilbestrol. Inhibited by duocarmycin analogs. Cytosolic dehydrogenase that catalyzes the irreversible oxidation of a wide range of aldehydes to their corresponding carboxylic acid. Functions downstream of retinol dehydrogenases and catalyzes the oxidation of retinaldehyde into retinoic acid, the second step in the oxidation of retinol/vitamin A into retinoic acid. This pathway is crucial to control the levels of retinol and retinoic acid, two important molecules which excess can be teratogenic and cytotoxic. Also oxidizes aldehydes resulting from lipid peroxidation like (E)-4-hydroxynon-2-enal/HNE, malonaldehyde and hexanal that form protein adducts and are highly cytotoxic. By participating for instance to the clearance of (E)-4-hydroxynon-2-enal/HNE in the lens epithelium prevents the formation of HNE-protein adducts and lens opacification. Also functions downstream of fructosamine-3-kinase in the fructosamine degradation pathway by catalyzing the oxidation of 3-deoxyglucosone, the carbohydrate product of fructosamine 3-phosphate decomposition, which is itself a potent glycating agent that may react with lysine and arginine side-chains of proteins. Also has an aminobutyraldehyde dehydrogenase activity and is probably part of an alternative pathway for the biosynthesis of GABA/4-aminobutanoate in midbrain, thereby playing a role in GABAergic synaptic transmission. In Homo sapiens (Human), this protein is Aldehyde dehydrogenase 1A1.